Consider the following 206-residue polypeptide: Dephospho-CoA kinase (206 aa).

Residues 4 to 200 (IVALTGGIGS…AYYLQLASQF (197 aa)) enclose the DPCK domain. Residue 12–17 (GSGKST) coordinates ATP.

This sequence belongs to the CoaE family.

It localises to the cytoplasm. The catalysed reaction is 3'-dephospho-CoA + ATP = ADP + CoA + H(+). It functions in the pathway cofactor biosynthesis; coenzyme A biosynthesis; CoA from (R)-pantothenate: step 5/5. Its function is as follows. Catalyzes the phosphorylation of the 3'-hydroxyl group of dephosphocoenzyme A to form coenzyme A. This chain is Dephospho-CoA kinase, found in Escherichia coli O6:H1 (strain CFT073 / ATCC 700928 / UPEC).